The primary structure comprises 410 residues: Iron-sulfur cluster assembly SufBD family protein MTH1150 homolog (410 aa).

This sequence belongs to the iron-sulfur cluster assembly SufBD family.

This Methanothermobacter thermautotrophicus (strain Winter) (Methanobacterium thermoautotrophicum) protein is Iron-sulfur cluster assembly SufBD family protein MTH1150 homolog.